Here is a 660-residue protein sequence, read N- to C-terminus: Threonine--tRNA ligase (660 aa).

The TGS domain maps to methionine 1–arginine 64. Residues aspartate 245–proline 547 are catalytic. Residues cysteine 341, histidine 392, and histidine 524 each coordinate Zn(2+).

It belongs to the class-II aminoacyl-tRNA synthetase family. As to quaternary structure, homodimer. Zn(2+) is required as a cofactor.

It localises to the cytoplasm. It carries out the reaction tRNA(Thr) + L-threonine + ATP = L-threonyl-tRNA(Thr) + AMP + diphosphate + H(+). Functionally, catalyzes the attachment of threonine to tRNA(Thr) in a two-step reaction: L-threonine is first activated by ATP to form Thr-AMP and then transferred to the acceptor end of tRNA(Thr). Also edits incorrectly charged L-seryl-tRNA(Thr). The protein is Threonine--tRNA ligase of Sinorhizobium medicae (strain WSM419) (Ensifer medicae).